A 227-amino-acid polypeptide reads, in one-letter code: ATP synthase F(0) complex subunit a (227 aa).

Helical transmembrane passes span 14 to 34 (FLGIPMILMALALPWLLIPTP), 73 to 93 (LASLMMFLLTLNMLGLMPYIF), 98 to 118 (QLSLNLGLAVPLWLATVLIGM), 137 to 157 (ALIPILIIMQTISLFIRPLAL), 179 to 199 (VFVLMPMMPVVAILTAVLLLL), and 203 to 223 (LEVAVAMIQAYVFILLLSLYL).

Belongs to the ATPase A chain family. In terms of assembly, component of the ATP synthase complex composed at least of ATP5F1A/subunit alpha, ATP5F1B/subunit beta, ATP5MC1/subunit c (homooctomer), MT-ATP6/subunit a, MT-ATP8/subunit 8, ATP5ME/subunit e, ATP5MF/subunit f, ATP5MG/subunit g, ATP5MK/subunit k, ATP5MJ/subunit j, ATP5F1C/subunit gamma, ATP5F1D/subunit delta, ATP5F1E/subunit epsilon, ATP5PF/subunit F6, ATP5PB/subunit b, ATP5PD/subunit d, ATP5PO/subunit OSCP. ATP synthase complex consists of a soluble F(1) head domain (subunits alpha(3) and beta(3)) - the catalytic core - and a membrane F(0) domain - the membrane proton channel (subunits c, a, 8, e, f, g, k and j). These two domains are linked by a central stalk (subunits gamma, delta, and epsilon) rotating inside the F1 region and a stationary peripheral stalk (subunits F6, b, d, and OSCP). Interacts with DNAJC30; interaction is direct.

The protein resides in the mitochondrion inner membrane. It carries out the reaction H(+)(in) = H(+)(out). Subunit a, of the mitochondrial membrane ATP synthase complex (F(1)F(0) ATP synthase or Complex V) that produces ATP from ADP in the presence of a proton gradient across the membrane which is generated by electron transport complexes of the respiratory chain. ATP synthase complex consist of a soluble F(1) head domain - the catalytic core - and a membrane F(1) domain - the membrane proton channel. These two domains are linked by a central stalk rotating inside the F(1) region and a stationary peripheral stalk. During catalysis, ATP synthesis in the catalytic domain of F(1) is coupled via a rotary mechanism of the central stalk subunits to proton translocation. With the subunit c (ATP5MC1), forms the proton-conducting channel in the F(0) domain, that contains two crucial half-channels (inlet and outlet) that facilitate proton movement from the mitochondrial intermembrane space (IMS) into the matrix. Protons are taken up via the inlet half-channel and released through the outlet half-channel, following a Grotthuss mechanism. The polypeptide is ATP synthase F(0) complex subunit a (Gadus morhua (Atlantic cod)).